A 146-amino-acid polypeptide reads, in one-letter code: Large ribosomal subunit protein uL15 (146 aa).

Residues 1–39 form a disordered region; that stretch reads MTLKLHNLRPAPGAKTAKTRVGRGEGSKGKTAGRGTKGT.

This sequence belongs to the universal ribosomal protein uL15 family. As to quaternary structure, part of the 50S ribosomal subunit.

Its function is as follows. Binds to the 23S rRNA. The sequence is that of Large ribosomal subunit protein uL15 from Nocardioides sp. (strain ATCC BAA-499 / JS614).